Consider the following 445-residue polypeptide: Tubulin beta chain (445 aa).

GTP contacts are provided by glutamine 11, glutamate 69, serine 138, glycine 142, threonine 143, glycine 144, asparagine 205, and asparagine 227. Residue glutamate 69 coordinates Mg(2+).

This sequence belongs to the tubulin family. In terms of assembly, dimer of alpha and beta chains. A typical microtubule is a hollow water-filled tube with an outer diameter of 25 nm and an inner diameter of 15 nM. Alpha-beta heterodimers associate head-to-tail to form protofilaments running lengthwise along the microtubule wall with the beta-tubulin subunit facing the microtubule plus end conferring a structural polarity. Microtubules usually have 13 protofilaments but different protofilament numbers can be found in some organisms and specialized cells. Mg(2+) is required as a cofactor.

It is found in the cytoplasm. The protein localises to the cytoskeleton. Tubulin is the major constituent of microtubules, a cylinder consisting of laterally associated linear protofilaments composed of alpha- and beta-tubulin heterodimers. Microtubules grow by the addition of GTP-tubulin dimers to the microtubule end, where a stabilizing cap forms. Below the cap, tubulin dimers are in GDP-bound state, owing to GTPase activity of alpha-tubulin. This Ajellomyces capsulatus (Darling's disease fungus) protein is Tubulin beta chain (TUB2).